The chain runs to 544 residues: CTP synthase (544 aa).

Residues 1–266 form an amidoligase domain region; it reads MSTKFIFVTG…DYFVCRRFHL (266 aa). Serine 14 provides a ligand contact to CTP. Residue serine 14 participates in UTP binding. ATP contacts are provided by residues 15-20 and aspartate 72; that span reads SLGKGI. Residues aspartate 72 and glutamate 140 each contribute to the Mg(2+) site. CTP contacts are provided by residues 147–149, 187–192, and lysine 223; these read DIE and KTKPTQ. UTP contacts are provided by residues 187–192 and lysine 223; that span reads KTKPTQ. The Glutamine amidotransferase type-1 domain maps to 291-542; the sequence is TIGMVGKYIE…VAAAHIHQKA (252 aa). An L-glutamine-binding site is contributed by glycine 352. Cysteine 379 acts as the Nucleophile; for glutamine hydrolysis in catalysis. Residues 380 to 383, glutamate 403, and arginine 470 each bind L-glutamine; that span reads LGMQ. Active-site residues include histidine 515 and glutamate 517.

This sequence belongs to the CTP synthase family. As to quaternary structure, homotetramer.

It catalyses the reaction UTP + L-glutamine + ATP + H2O = CTP + L-glutamate + ADP + phosphate + 2 H(+). The catalysed reaction is L-glutamine + H2O = L-glutamate + NH4(+). It carries out the reaction UTP + NH4(+) + ATP = CTP + ADP + phosphate + 2 H(+). The protein operates within pyrimidine metabolism; CTP biosynthesis via de novo pathway; CTP from UDP: step 2/2. Its activity is regulated as follows. Allosterically activated by GTP, when glutamine is the substrate; GTP has no effect on the reaction when ammonia is the substrate. The allosteric effector GTP functions by stabilizing the protein conformation that binds the tetrahedral intermediate(s) formed during glutamine hydrolysis. Inhibited by the product CTP, via allosteric rather than competitive inhibition. Catalyzes the ATP-dependent amination of UTP to CTP with either L-glutamine or ammonia as the source of nitrogen. Regulates intracellular CTP levels through interactions with the four ribonucleotide triphosphates. In Pseudoalteromonas translucida (strain TAC 125), this protein is CTP synthase.